Here is a 310-residue protein sequence, read N- to C-terminus: MPATDTNSTHTTPLHPEDQHTLPLHHSTTQPHVQTSDKHADKQHRTQMELDAADYAACAQARQHLYGQTQPQLHAYPNANPQESAHFRTENQHQLTNLLHNIGEGAALGYPVPRAEIRRGGGDWADSASDFDADCWCMWGRFGTMGRQPVVTLLLARQRDGLADWNVVRCRGTGFRAHDSEDGVSVWRQHLVFLLGGHGRRVQLERPSAGEAQARGLLPRIRITPISTSPRPKPPQPTTSTASHPHATARPDHTLFPVPSTPSATVHNPRNYAVQLHAETTRTWRWARRGERGAWMPAETFTCPKDKRPW.

A compositionally biased stretch (polar residues) spans Met-1–Thr-12. Positions Met-1 to His-44 are disordered. Basic and acidic residues predominate over residues Thr-35–His-44. The interval Leu-153 to Arg-159 is involved in the interaction with host DDB1. The tract at residues Glu-205–Asp-252 is disordered. Positions Thr-238–Thr-248 are enriched in low complexity.

The protein belongs to the HHV-5 HKLF1 family. In terms of assembly, interacts with host adaptor protein DDB1; this interaction allows RL1 to recruit the cullin4-RING E3 ubiquitin ligase (CRL4) complex and promote SLN11 degradation.

Functionally, degrades the host antiviral factor SLFN11 via the cullin4-RING E3 ubiquitin ligase (CRL4) complex. The polypeptide is Protein RL1 (RL1) (Human cytomegalovirus (strain Merlin) (HHV-5)).